Reading from the N-terminus, the 390-residue chain is 1-deoxy-D-xylulose 5-phosphate reductoisomerase (390 aa).

Residues T10, G11, S12, I13, G36, R37, N38, and N121 each contribute to the NADPH site. Position 122 (K122) interacts with 1-deoxy-D-xylulose 5-phosphate. An NADPH-binding site is contributed by E123. D147 contributes to the Mn(2+) binding site. 1-deoxy-D-xylulose 5-phosphate contacts are provided by S148, E149, S173, and H196. E149 lines the Mn(2+) pocket. G202 lines the NADPH pocket. 1-deoxy-D-xylulose 5-phosphate-binding residues include S209, N214, K215, and E218. E218 is a Mn(2+) binding site. The segment at 367–390 is disordered; the sequence is AASEHGRREAEKRVGARAHAPAGR. The segment covering 370 to 380 has biased composition (basic and acidic residues); that stretch reads EHGRREAEKRV.

The protein belongs to the DXR family. Requires Mg(2+) as cofactor. Mn(2+) serves as cofactor.

It carries out the reaction 2-C-methyl-D-erythritol 4-phosphate + NADP(+) = 1-deoxy-D-xylulose 5-phosphate + NADPH + H(+). Its pathway is isoprenoid biosynthesis; isopentenyl diphosphate biosynthesis via DXP pathway; isopentenyl diphosphate from 1-deoxy-D-xylulose 5-phosphate: step 1/6. Its function is as follows. Catalyzes the NADPH-dependent rearrangement and reduction of 1-deoxy-D-xylulose-5-phosphate (DXP) to 2-C-methyl-D-erythritol 4-phosphate (MEP). In Anaeromyxobacter sp. (strain K), this protein is 1-deoxy-D-xylulose 5-phosphate reductoisomerase.